Here is a 324-residue protein sequence, read N- to C-terminus: Phospho-N-acetylmuramoyl-pentapeptide-transferase (324 aa).

A run of 10 helical transmembrane segments spans residues 5 to 25 (AIVI…PLFI), 57 to 77 (IMIL…IAGL), 81 to 101 (TYLL…DDMI), 117 to 137 (FIGQ…SGFS), 147 to 167 (WSVD…VGGS), 176 to 196 (LDGL…VLAW), 203 to 223 (VAVF…FNAH), 227 to 247 (VFMG…VAVL), 250 to 270 (LELL…SVII), and 302 to 322 (IVVT…YIEV).

It belongs to the glycosyltransferase 4 family. MraY subfamily. Mg(2+) is required as a cofactor.

Its subcellular location is the cell membrane. It carries out the reaction UDP-N-acetyl-alpha-D-muramoyl-L-alanyl-gamma-D-glutamyl-meso-2,6-diaminopimeloyl-D-alanyl-D-alanine + di-trans,octa-cis-undecaprenyl phosphate = di-trans,octa-cis-undecaprenyl diphospho-N-acetyl-alpha-D-muramoyl-L-alanyl-D-glutamyl-meso-2,6-diaminopimeloyl-D-alanyl-D-alanine + UMP. Its pathway is cell wall biogenesis; peptidoglycan biosynthesis. In terms of biological role, catalyzes the initial step of the lipid cycle reactions in the biosynthesis of the cell wall peptidoglycan: transfers peptidoglycan precursor phospho-MurNAc-pentapeptide from UDP-MurNAc-pentapeptide onto the lipid carrier undecaprenyl phosphate, yielding undecaprenyl-pyrophosphoryl-MurNAc-pentapeptide, known as lipid I. The protein is Phospho-N-acetylmuramoyl-pentapeptide-transferase of Geobacillus kaustophilus (strain HTA426).